The sequence spans 468 residues: N-acyl-phosphatidylethanolamine-hydrolyzing phospholipase D, mitochondrial (468 aa).

The transit peptide at 1–39 directs the protein to the mitochondrion; that stretch reads MNFVTCHVQMRLLLQRRLVRLRESELFRPQTSLSTFKRH. Residues 54–76 form a helical membrane-spanning segment; the sequence is YARILLLSVLVPYTGYAFYVSLA. 6 residues coordinate Zn(2+): His265, His267, Asp269, His270, His332, and His425.

Belongs to the NAPE-PLD family. It depends on Zn(2+) as a cofactor.

Its subcellular location is the mitochondrion membrane. It catalyses the reaction an N-acyl-1,2-diacyl-sn-glycero-3-phosphoethanolamine + H2O = an N-acylethanolamine + a 1,2-diacyl-sn-glycero-3-phosphate + H(+). Hydrolyzes N-acyl-phosphatidylethanolamines (NAPEs) to produce N-acylethanolamines (NAEs). This Saccharomyces cerevisiae (strain ATCC 204508 / S288c) (Baker's yeast) protein is N-acyl-phosphatidylethanolamine-hydrolyzing phospholipase D, mitochondrial (FMP30).